The following is a 308-amino-acid chain: Glutaminase (308 aa).

Residues Ser66, Asn117, Glu161, Asn168, Tyr192, Tyr244, and Val262 each coordinate substrate.

This sequence belongs to the glutaminase family. In terms of assembly, homotetramer.

It carries out the reaction L-glutamine + H2O = L-glutamate + NH4(+). This chain is Glutaminase, found in Cronobacter sakazakii (strain ATCC BAA-894) (Enterobacter sakazakii).